Here is a 266-residue protein sequence, read N- to C-terminus: Glucosamine-6-phosphate deaminase (266 aa).

The active-site Proton acceptor; for enolization step is the Asp72. Asp141 (for ring-opening step) is an active-site residue. The active-site Proton acceptor; for ring-opening step is the His143. Residue Glu148 is the For ring-opening step of the active site.

This sequence belongs to the glucosamine/galactosamine-6-phosphate isomerase family. NagB subfamily. As to quaternary structure, homohexamer.

It carries out the reaction alpha-D-glucosamine 6-phosphate + H2O = beta-D-fructose 6-phosphate + NH4(+). It functions in the pathway amino-sugar metabolism; N-acetylneuraminate degradation; D-fructose 6-phosphate from N-acetylneuraminate: step 5/5. Allosterically activated by N-acetylglucosamine 6-phosphate (GlcNAc6P). Catalyzes the reversible isomerization-deamination of glucosamine 6-phosphate (GlcN6P) to form fructose 6-phosphate (Fru6P) and ammonium ion. The sequence is that of Glucosamine-6-phosphate deaminase from Aeromonas hydrophila subsp. hydrophila (strain ATCC 7966 / DSM 30187 / BCRC 13018 / CCUG 14551 / JCM 1027 / KCTC 2358 / NCIMB 9240 / NCTC 8049).